A 332-amino-acid chain; its full sequence is Ketol-acid reductoisomerase (NADP(+)) (332 aa).

The region spanning 2-182 (AKVYYDEDAS…GCTRAGLIET (181 aa)) is the KARI N-terminal Rossmann domain. NADP(+) is bound by residues 25 to 28 (YGSQ), serine 51, serine 53, and 83 to 86 (DTIQ). Residue histidine 108 is part of the active site. NADP(+) is bound at residue glycine 134. The 145-residue stretch at 183-327 (TFKEETETDL…KELRKMMPWL (145 aa)) folds into the KARI C-terminal knotted domain. The Mg(2+) site is built by aspartate 191, glutamate 195, glutamate 227, and glutamate 231. Substrate is bound at residue serine 252.

This sequence belongs to the ketol-acid reductoisomerase family. Mg(2+) is required as a cofactor.

The catalysed reaction is (2R)-2,3-dihydroxy-3-methylbutanoate + NADP(+) = (2S)-2-acetolactate + NADPH + H(+). The enzyme catalyses (2R,3R)-2,3-dihydroxy-3-methylpentanoate + NADP(+) = (S)-2-ethyl-2-hydroxy-3-oxobutanoate + NADPH + H(+). It functions in the pathway amino-acid biosynthesis; L-isoleucine biosynthesis; L-isoleucine from 2-oxobutanoate: step 2/4. The protein operates within amino-acid biosynthesis; L-valine biosynthesis; L-valine from pyruvate: step 2/4. Involved in the biosynthesis of branched-chain amino acids (BCAA). Catalyzes an alkyl-migration followed by a ketol-acid reduction of (S)-2-acetolactate (S2AL) to yield (R)-2,3-dihydroxy-isovalerate. In the isomerase reaction, S2AL is rearranged via a Mg-dependent methyl migration to produce 3-hydroxy-3-methyl-2-ketobutyrate (HMKB). In the reductase reaction, this 2-ketoacid undergoes a metal-dependent reduction by NADPH to yield (R)-2,3-dihydroxy-isovalerate. This is Ketol-acid reductoisomerase (NADP(+)) from Persephonella marina (strain DSM 14350 / EX-H1).